Reading from the N-terminus, the 406-residue chain is Phosphopentomutase (406 aa).

Residues Asp10, Asp305, His310, Asp346, His347, and His358 each contribute to the Mn(2+) site.

Belongs to the phosphopentomutase family. The cofactor is Mn(2+).

The protein resides in the cytoplasm. It carries out the reaction 2-deoxy-alpha-D-ribose 1-phosphate = 2-deoxy-D-ribose 5-phosphate. The enzyme catalyses alpha-D-ribose 1-phosphate = D-ribose 5-phosphate. Its pathway is carbohydrate degradation; 2-deoxy-D-ribose 1-phosphate degradation; D-glyceraldehyde 3-phosphate and acetaldehyde from 2-deoxy-alpha-D-ribose 1-phosphate: step 1/2. In terms of biological role, isomerase that catalyzes the conversion of deoxy-ribose 1-phosphate (dRib-1-P) and ribose 1-phosphate (Rib-1-P) to deoxy-ribose 5-phosphate (dRib-5-P) and ribose 5-phosphate (Rib-5-P), respectively. This Aliivibrio salmonicida (strain LFI1238) (Vibrio salmonicida (strain LFI1238)) protein is Phosphopentomutase.